A 138-amino-acid polypeptide reads, in one-letter code: MLSPRKVKYRKKQRGRLSGEAQKGNKISFGEYGLVSLEADFITARQIEAARVAMTRRVKRGGKVWIRIFPDIPYTKKPAETRMGKGKGGVDHWNAPVKLGTVMFEISGVPRELAESAMMLASSKLPVKTTFVVRRDLR.

Over residues 1 to 15 (MLSPRKVKYRKKQRG) the composition is skewed to basic residues. The interval 1-21 (MLSPRKVKYRKKQRGRLSGEA) is disordered.

Belongs to the universal ribosomal protein uL16 family. Part of the 50S ribosomal subunit.

Binds 23S rRNA and is also seen to make contacts with the A and possibly P site tRNAs. The polypeptide is Large ribosomal subunit protein uL16 (Borrelia recurrentis (strain A1)).